The primary structure comprises 288 residues: 4-hydroxybenzoate octaprenyltransferase (288 aa).

The next 8 membrane-spanning stretches (helical) occupy residues 23–43, 46–66, 98–118, 141–161, 163–183, 213–233, 234–254, and 268–288; these read IGSL…GRGI, AKIL…GCVV, ILFV…NSMT, LPQV…FAAV, ESLP…TVAY, LIIG…GWLM, NLGG…THQQ, and AFLN…ISYW.

The protein belongs to the UbiA prenyltransferase family. Requires Mg(2+) as cofactor.

It is found in the cell inner membrane. The enzyme catalyses all-trans-octaprenyl diphosphate + 4-hydroxybenzoate = 4-hydroxy-3-(all-trans-octaprenyl)benzoate + diphosphate. It participates in cofactor biosynthesis; ubiquinone biosynthesis. Its function is as follows. Catalyzes the prenylation of para-hydroxybenzoate (PHB) with an all-trans polyprenyl group. Mediates the second step in the final reaction sequence of ubiquinone-8 (UQ-8) biosynthesis, which is the condensation of the polyisoprenoid side chain with PHB, generating the first membrane-bound Q intermediate 3-octaprenyl-4-hydroxybenzoate. The polypeptide is 4-hydroxybenzoate octaprenyltransferase (Yersinia pseudotuberculosis serotype IB (strain PB1/+)).